The following is a 279-amino-acid chain: Protein COP1 SUPPRESSOR 2 (279 aa).

2 disordered regions span residues 1-29 and 57-79; these read MPPKRNFRKRSFEEEEEDNDVNKAAISEE and SSTAQSSIGKVKPVEKTETEGEK. Over residues 68-79 the composition is skewed to basic and acidic residues; sequence KPVEKTETEGEK. Positions 86 to 183 form a coiled coil; it reads DTFAQETAVL…EETEAAKKLL (98 aa). Over residues 217–229 the composition is skewed to basic and acidic residues; the sequence is LRREHPELYKDRG. Residues 217–279 are disordered; sequence LRREHPELYK…KRERNRVMRR (63 aa). The span at 250–260 shows a compositional bias: polar residues; that stretch reads ADSGKSRQAAT. Residues 270 to 279 are compositionally biased toward basic residues; sequence KRERNRVMRR.

The protein belongs to the TLS1 family. Interacts with COP1.

It is found in the nucleus. The protein resides in the nucleus speckle. Its function is as follows. Inhibits E3 ubiquitin-protein ligase activity of COP1, a central repressor of seedling photomorphogenesis. Represses COP1-mediated turnover of HY5 in the dark. Required for primary root development under normal light growth conditions. In Arabidopsis thaliana (Mouse-ear cress), this protein is Protein COP1 SUPPRESSOR 2.